The primary structure comprises 246 residues: 2-deoxyglucose-6-phosphate phosphatase 1 (246 aa).

The active-site Nucleophile is aspartate 83. A Mg(2+)-binding site is contributed by aspartate 83. Substrate contacts are provided by residues aspartate 83, glutamate 92, and 146 to 149 (DVKN). Aspartate 183 is a binding site for Mg(2+).

The protein belongs to the HAD-like hydrolase superfamily. DOG/GPP family. Requires Mg(2+) as cofactor.

The catalysed reaction is 2-deoxy-D-glucose 6-phosphate + H2O = 2-deoxy-D-glucose + phosphate. Functionally, phosphatase that is active on 2-deoxy-D-glucose 6-phosphate (2-DOG-6P), as well as on fructose-1-P. In Saccharomyces cerevisiae (strain ATCC 204508 / S288c) (Baker's yeast), this protein is 2-deoxyglucose-6-phosphate phosphatase 1.